The following is a 261-amino-acid chain: Hydrolase in agr operon (261 aa).

Residues 1–239 (MKVQIYQLPI…ADILTVDLNL (239 aa)) enclose the CN hydrolase domain. Catalysis depends on E41, which acts as the Proton acceptor. Catalysis depends on K110, which acts as the Proton donor. Residue C146 is the Nucleophile of the active site.

The protein belongs to the carbon-nitrogen hydrolase superfamily. NIT1/NIT2 family.

This Staphylococcus aureus protein is Hydrolase in agr operon.